Here is a 102-residue protein sequence, read N- to C-terminus: Large ribosomal subunit protein bL21 (102 aa).

This sequence belongs to the bacterial ribosomal protein bL21 family. Part of the 50S ribosomal subunit. Contacts protein L20.

Its function is as follows. This protein binds to 23S rRNA in the presence of protein L20. This chain is Large ribosomal subunit protein bL21, found in Ehrlichia canis (strain Jake).